Here is a 319-residue protein sequence, read N- to C-terminus: Probable cytochrome c oxidase subunit 2 (319 aa).

Residues 1–33 (MSPNGSDRSPRRPMRRKLLQALTAGLVLATATG) form the signal peptide. The next 2 helical transmembrane spans lie at 63–83 (WAAA…ATIF) and 101–121 (MPIE…LFYF). Cu cation is bound by residues His227, Cys262, Cys266, and His270.

This sequence belongs to the cytochrome c oxidase subunit 2 family. Requires Cu cation as cofactor. The cofactor is heme.

Its subcellular location is the cell membrane. It carries out the reaction 4 Fe(II)-[cytochrome c] + O2 + 8 H(+)(in) = 4 Fe(III)-[cytochrome c] + 2 H2O + 4 H(+)(out). Functionally, subunits I and II form the functional core of the enzyme complex. Electrons originating in cytochrome c are transferred via heme a and Cu(A) to the binuclear center formed by heme a3 and Cu(B). The protein is Probable cytochrome c oxidase subunit 2 (ctaC) of Streptomyces avermitilis (strain ATCC 31267 / DSM 46492 / JCM 5070 / NBRC 14893 / NCIMB 12804 / NRRL 8165 / MA-4680).